The following is a 683-amino-acid chain: Solute carrier family 28 member 3 (683 aa).

The tract at residues 1-71 (MSAFKARGVE…EEEEEGEEDQ (71 aa)) is disordered. The Cytoplasmic segment spans residues 1–97 (MSAFKARGVE…FYKRNKKIIH (97 aa)). Residues 60-71 (DNEEEEEGEEDQ) are compositionally biased toward acidic residues. The helical transmembrane segment at 98-118 (YTFLGLLLVGYFALVIAACIV) threads the bilayer. Topologically, residues 119–123 (NFKQS) are extracellular. The helical transmembrane segment at 124–144 (LALLVLTLIAIFFFFWDLFIA) threads the bilayer. Over 145–168 (KYGDKIAEALKPCQKFLDNHWSII) the chain is Cytoplasmic. A helical transmembrane segment spans residues 169-189 (RWFVYGALLLAVILWLTLDTA). Over 190–192 (KRG) the chain is Extracellular. Residues 193–214 (ANQVIPFFGLILYILLVFIFSK) traverse the membrane as a helical segment. The Cytoplasmic portion of the chain corresponds to 215-222 (HPTKVRWR). Residues 223–242 (IVIWGLLLQFIFGLIILRTK) form a helical membrane-spanning segment. Over 243-279 (PGLDAFNWLGIQVQTFLKYTDAGSRFLFGDDFQDHFF) the chain is Extracellular. The helical transmembrane segment at 280–300 (AFAVLPIVIFFSTVMSMMYYL) threads the bilayer. Over 301 to 324 (GLMQWLILKVGWLMQITMGTSPME) the chain is Cytoplasmic. The segment at residues 325 to 343 (SMVSAGNIFVGQTESPLLI) is an intramembrane region (helical). Residues 344 to 356 (RPYLADLTISEMH) lie on the Cytoplasmic side of the membrane. The helical transmembrane segment at 357–379 (SVMSSGFATIAGSVLGAYISLGI) threads the bilayer. Topologically, residues 380–381 (PA) are extracellular. Residues 382–403 (AHLLTASVMSAPAALAISKTFW) traverse the membrane as a helical segment. Topologically, residues 404-438 (PETKKSKNSTQTSIKLEKGQENNLVEAASQGASAA) are cytoplasmic. Residues 439 to 464 (VPLVANIAANLIAFLAVLAFINATLS) traverse the membrane as a helical segment. The Extracellular portion of the chain corresponds to 465–502 (WLGSMFNYPQFSFEIICSYVLMPFAFMMGVNYDDSFLV). The helical intramembrane region spans 503 to 522 (AELLGMKTFFNEFVAYQRLS). Residues 523–561 (EYIHNRESGGPLFVDGVRQYMSVRSEAIATYALCGFANF) are Extracellular-facing. A helical membrane pass occupies residues 562–572 (GSLGIMIGGLS). At 573–585 (SLAPHRKSDIASC) the chain is on the cytoplasmic side. The helical transmembrane segment at 586-608 (GIRALIAGTIACFSTACIAGVLY) threads the bilayer. Residues 609–683 (IPELYCPNLL…GFNCSEVRPE (75 aa)) are Extracellular-facing.

It belongs to the concentrative nucleoside transporter (CNT) (TC 2.A.41) family. In terms of assembly, homotrimer.

The protein resides in the cell membrane. It carries out the reaction thymidine(out) + 2 Na(+)(out) = thymidine(in) + 2 Na(+)(in). The enzyme catalyses cytidine(out) + 2 Na(+)(out) = cytidine(in) + 2 Na(+)(in). The catalysed reaction is uridine(out) + 2 Na(+)(out) = uridine(in) + 2 Na(+)(in). It catalyses the reaction adenosine(out) + 2 Na(+)(out) = adenosine(in) + 2 Na(+)(in). It carries out the reaction guanosine(out) + 2 Na(+)(out) = guanosine(in) + 2 Na(+)(in). The enzyme catalyses inosine(out) + 2 Na(+)(out) = inosine(in) + 2 Na(+)(in). Sodium-dependent, pyrimidine- and purine-selective. Involved in the homeostasis of endogenous nucleosides. Exhibits the transport characteristics of the nucleoside transport system cib or N3 subtype (N3/cib) (with marked transport of both thymidine and inosine). Employs a 2:1 sodium/nucleoside ratio. Also able to transport gemcitabine, 3'-azido-3'-deoxythymidine (AZT), ribavirin and 3-deazauridine. The protein is Solute carrier family 28 member 3 (SLC28A3) of Eptatretus stoutii (Pacific hagfish).